Reading from the N-terminus, the 279-residue chain is Prepilin leader peptidase/N-methyltransferase (279 aa).

The Periplasmic portion of the chain corresponds to 1-16 (MDDLREFAQLFPAWWF). Residues 17-35 (GALGVLGLIVGSFLNVVIY) traverse the membrane as a helical segment. Residues 36-104 (RLPIMLERRW…RSRCCHQSVS (69 aa)) lie on the Cytoplasmic side of the membrane. The chain crosses the membrane as a helical span at residues 105-123 (VQYPLVEVITMLAFLAAGL). Over 124–130 (LWLPGMA) the chain is Periplasmic. The chain crosses the membrane as a helical span at residues 131 to 149 (LWGALILLSFLLVLTVIDI). Topologically, residues 150 to 163 (KTLLLPDELTLSLL) are cytoplasmic. Residues 164 to 182 (WMGLLFNLSGTFVSLNDAV) form a helical membrane-spanning segment. Over 183-185 (VGA) the chain is Periplasmic. The chain crosses the membrane as a helical span at residues 186 to 204 (MAGYLSLWLLYWAFKYATG). At 205–214 (KEALGYGDFK) the chain is on the cytoplasmic side. Residues 215–233 (LLAALGAWLGWQALPNLVL) traverse the membrane as a helical segment. The Periplasmic portion of the chain corresponds to 234–236 (VAA). Residues 237-254 (LSGLVVTLIWRGLRKEDT) form a helical membrane-spanning segment. Over 255–257 (AKP) the chain is Cytoplasmic. A helical transmembrane segment spans residues 258–276 (LAFGPWLAIGGVFGMIMNG). The Periplasmic segment spans residues 277–279 (FNL).

The protein belongs to the peptidase A24 family.

The protein localises to the cell inner membrane. The catalysed reaction is Typically cleaves a -Gly-|-Phe- bond to release an N-terminal, basic peptide of 5-8 residues from type IV prepilin, and then N-methylates the new N-terminal amino group, the methyl donor being S-adenosyl-L-methionine.. Plays a role in type II pseudopili formation by proteolytically removing the leader sequence from substrate proteins and subsequently monomethylating the alpha-amino group of the newly exposed N-terminal phenylalanine. Substrates include proteins required for biogenesis of the type II general secretory apparatus. The polypeptide is Prepilin leader peptidase/N-methyltransferase (outO) (Pectobacterium carotovorum subsp. carotovorum (Erwinia carotovora subsp. carotovora)).